The following is a 648-amino-acid chain: Exoribonuclease 2 (648 aa).

The RNB domain maps to 191-518; it reads RIDLTYLDFI…INHRLIKSII (328 aa). The region spanning 565–647 is the S1 motif domain; the sequence is KKKYQANIID…GNKKIIATMI (83 aa).

The protein belongs to the RNR ribonuclease family. RNase II subfamily.

The protein resides in the cytoplasm. The catalysed reaction is Exonucleolytic cleavage in the 3'- to 5'-direction to yield nucleoside 5'-phosphates.. In terms of biological role, involved in mRNA degradation. Hydrolyzes single-stranded polyribonucleotides processively in the 3' to 5' direction. The chain is Exoribonuclease 2 from Buchnera aphidicola subsp. Cinara cedri (strain Cc).